Reading from the N-terminus, the 368-residue chain is UDP-N-acetylglucosamine--N-acetylmuramyl-(pentapeptide) pyrophosphoryl-undecaprenol N-acetylglucosamine transferase (368 aa).

Residues 10–12 (TGG), Asn-126, Ser-200, Ile-255, and Gln-300 contribute to the UDP-N-acetyl-alpha-D-glucosamine site.

The protein belongs to the glycosyltransferase 28 family. MurG subfamily.

The protein localises to the cell membrane. It catalyses the reaction Mur2Ac(oyl-L-Ala-gamma-D-Glu-L-Lys-D-Ala-D-Ala)-di-trans,octa-cis-undecaprenyl diphosphate + UDP-N-acetyl-alpha-D-glucosamine = beta-D-GlcNAc-(1-&gt;4)-Mur2Ac(oyl-L-Ala-gamma-D-Glu-L-Lys-D-Ala-D-Ala)-di-trans,octa-cis-undecaprenyl diphosphate + UDP + H(+). It functions in the pathway cell wall biogenesis; peptidoglycan biosynthesis. Functionally, cell wall formation. Catalyzes the transfer of a GlcNAc subunit on undecaprenyl-pyrophosphoryl-MurNAc-pentapeptide (lipid intermediate I) to form undecaprenyl-pyrophosphoryl-MurNAc-(pentapeptide)GlcNAc (lipid intermediate II). The polypeptide is UDP-N-acetylglucosamine--N-acetylmuramyl-(pentapeptide) pyrophosphoryl-undecaprenol N-acetylglucosamine transferase (Lactobacillus helveticus (strain DPC 4571)).